The following is a 182-amino-acid chain: Large ribosomal subunit protein uL16 (182 aa).

Belongs to the universal ribosomal protein uL16 family.

In Thermococcus onnurineus (strain NA1), this protein is Large ribosomal subunit protein uL16.